The following is a 165-amino-acid chain: NADPH-dependent 7-cyano-7-deazaguanine reductase (165 aa).

The active-site Thioimide intermediate is the cysteine 56. The active-site Proton donor is aspartate 63. Substrate is bound by residues 78–80 (VES) and 97–98 (HE).

Belongs to the GTP cyclohydrolase I family. QueF type 1 subfamily.

The protein localises to the cytoplasm. It carries out the reaction 7-aminomethyl-7-carbaguanine + 2 NADP(+) = 7-cyano-7-deazaguanine + 2 NADPH + 3 H(+). Its pathway is tRNA modification; tRNA-queuosine biosynthesis. Its function is as follows. Catalyzes the NADPH-dependent reduction of 7-cyano-7-deazaguanine (preQ0) to 7-aminomethyl-7-deazaguanine (preQ1). The chain is NADPH-dependent 7-cyano-7-deazaguanine reductase from Bacillus cereus (strain ATCC 14579 / DSM 31 / CCUG 7414 / JCM 2152 / NBRC 15305 / NCIMB 9373 / NCTC 2599 / NRRL B-3711).